Here is a 327-residue protein sequence, read N- to C-terminus: L-lactate dehydrogenase 1 (327 aa).

NAD(+)-binding positions include valine 21, aspartate 42, lysine 47, tyrosine 72, and 86-87 (GA). Substrate-binding positions include glutamine 89, arginine 95, and 127-130 (NPVD). Residues 125 to 127 (AAN) and serine 150 each bind NAD(+). 155 to 158 (DSAR) is a binding site for substrate. The beta-D-fructose 1,6-bisphosphate site is built by arginine 160 and histidine 175. Histidine 182 functions as the Proton acceptor in the catalytic mechanism. Tyrosine 227 bears the Phosphotyrosine mark. Threonine 236 provides a ligand contact to substrate.

Belongs to the LDH/MDH superfamily. LDH family. In terms of assembly, homotetramer.

It localises to the cytoplasm. It carries out the reaction (S)-lactate + NAD(+) = pyruvate + NADH + H(+). It participates in fermentation; pyruvate fermentation to lactate; (S)-lactate from pyruvate: step 1/1. Allosterically activated by fructose 1,6-bisphosphate (FBP). Its function is as follows. Catalyzes the conversion of lactate to pyruvate. The sequence is that of L-lactate dehydrogenase 1 from Enterococcus faecalis (strain ATCC 700802 / V583).